The chain runs to 998 residues: Poly [ADP-ribose] polymerase 1 (998 aa).

2 consecutive PARP-type zinc fingers follow at residues alanine 1 to glycine 78 and phenylalanine 99 to lysine 189. Cysteine 8, cysteine 11, histidine 40, cysteine 43, cysteine 111, cysteine 114, histidine 145, and cysteine 148 together coordinate Zn(2+). Residues leucine 185 to lysine 211 form a disordered region. Positions asparagine 190–glycine 201 are enriched in basic and acidic residues. 2 short sequence motifs (nuclear localization signal) span residues lysine 193–lysine 195 and lysine 207–lysine 212. Residues lysine 211–proline 345 enclose the PADR1 zinc-binding domain. Residues glycine 276–aspartate 318 are zinc ribbon. The Zn(2+) site is built by cysteine 281, cysteine 284, cysteine 297, and cysteine 307. The span at alanine 348–lysine 361 shows a compositional bias: pro residues. A disordered region spans residues alanine 348–glutamate 370. Residues alanine 357–lysine 507 form an automodification domain region. Positions proline 369–glycine 460 constitute a BRCT domain. Residues glutamate 391, glutamate 397, glutamate 419, glutamate 428, glutamate 429, glutamate 445, glutamate 447, glutamate 454, glutamate 467, glutamate 471, glutamate 477, glutamate 495, glutamate 496, and glutamate 503 each carry the polyADP-ribosyl glutamic acid modification. The disordered stretch occupies residues glutamate 471–valine 510. Positions lysine 492 to methionine 506 are enriched in basic and acidic residues. The WGR domain occupies serine 525 to phenylalanine 621. One can recognise a PARP alpha-helical domain in the interval lysine 645–arginine 762. The PARP catalytic domain occupies aspartate 771 to methionine 997. NAD(+)-binding positions include histidine 845–serine 847, glycine 854, arginine 861, and serine 887. Glutamate 971 (for poly [ADP-ribose] polymerase activity) is an active-site residue.

This sequence belongs to the ARTD/PARP family. As to quaternary structure, homodimer; PARP-type zinc-fingers from separate parp1 molecules form a dimer module that specifically recognizes DNA strand breaks. Poly-ADP-ribosylated on serine, glutamate and aspartate residues by autocatalysis. Auto-ADP-ribosylation on serine takes place following interaction with HPF1. Auto poly-ADP-ribosylation on serine residues promotes its dissociation from chromatin.

It localises to the chromosome. Its subcellular location is the nucleus. The protein resides in the nucleolus. It is found in the cytoplasm. The protein localises to the cytosol. The enzyme catalyses NAD(+) + (ADP-D-ribosyl)n-acceptor = nicotinamide + (ADP-D-ribosyl)n+1-acceptor + H(+).. It catalyses the reaction L-seryl-[protein] + NAD(+) = O-(ADP-D-ribosyl)-L-seryl-[protein] + nicotinamide + H(+). The catalysed reaction is L-aspartyl-[protein] + NAD(+) = 4-O-(ADP-D-ribosyl)-L-aspartyl-[protein] + nicotinamide. It carries out the reaction L-glutamyl-[protein] + NAD(+) = 5-O-(ADP-D-ribosyl)-L-glutamyl-[protein] + nicotinamide. The enzyme catalyses L-tyrosyl-[protein] + NAD(+) = O-(ADP-D-ribosyl)-L-tyrosyl-[protein] + nicotinamide + H(+). It catalyses the reaction L-histidyl-[protein] + NAD(+) = N(tele)-(ADP-D-ribosyl)-L-histidyl-[protein] + nicotinamide + H(+). Its activity is regulated as follows. ADP-ribosyltransferase activity is regulated via an allosteric activation mechanism. In absence of activation signal, parp1 is autoinhibited by the PARP alpha-helical domain (also named HD region), which prevents effective NAD(+)-binding. Activity is highly stimulated by signals, such as DNA strand breaks. Binding to damaged DNA unfolds the PARP alpha-helical domain, relieving autoinhibition. Poly-ADP-ribosyltransferase activity is tightly regulated and parp1 is removed from damaged chromatin following initial poly-ADP-ribosylation of chromatin to avoid prolonged residence (trapping) that has cytotoxic consequences. A number of factors or post-translational modifications (auto-poly-ADP-ribosylation) promote parp1 removal from chromatin. In terms of biological role, poly-ADP-ribosyltransferase that mediates poly-ADP-ribosylation of proteins and plays a key role in DNA repair. Mediates glutamate, aspartate, serine, histidine or tyrosine ADP-ribosylation of proteins: the ADP-D-ribosyl group of NAD(+) is transferred to the acceptor carboxyl group of target residues and further ADP-ribosyl groups are transferred to the 2'-position of the terminal adenosine moiety, building up a polymer with an average chain length of 20-30 units. Serine ADP-ribosylation of proteins constitutes the primary form of ADP-ribosylation of proteins in response to DNA damage. Specificity for the different amino acids is conferred by interacting factors, such as hpf1 and nmnat1. Following interaction with hpf1, catalyzes serine ADP-ribosylation of target proteins; hpf1 confers serine specificity by completing the parp1 active site. Also catalyzes tyrosine ADP-ribosylation of target proteins following interaction with hpf1. Following interaction with nmnat1, catalyzes glutamate and aspartate ADP-ribosylation of target proteins; nmnat1 confers glutamate and aspartate specificity. Parp1 initiates the repair of DNA breaks: recognizes and binds DNA breaks within chromatin and recruits hpf1, licensing serine ADP-ribosylation of target proteins, such as histones (H2BS6ADPr and H3S10ADPr), thereby promoting decompaction of chromatin and the recruitment of repair factors leading to the reparation of DNA strand breaks. In addition to base excision repair (BER) pathway, also involved in double-strand breaks (DSBs) repair. Mediates the poly-ADP-ribosylation of a number of proteins. In addition to proteins, also able to ADP-ribosylate DNA: catalyzes ADP-ribosylation of DNA strand break termini containing terminal phosphates and a 2'-OH group in single- and double-stranded DNA, respectively. Parp1-mediated DNA repair in neurons plays a role in sleep: senses DNA damage in neurons and promotes sleep, facilitating efficient DNA repair. In addition to DNA repair, also involved in other processes, such as transcription regulation, programmed cell death, membrane repair, adipogenesis and innate immunity. Acts as a repressor of transcription: binds to nucleosomes and modulates chromatin structure in a manner similar to histone H1, thereby altering RNA polymerase II. Acts both as a positive and negative regulator of transcription elongation, depending on the context. Poly-ADP-ribose chains generated by parp1 also play a role in poly-ADP-ribose-dependent cell death, a process named parthanatos. Also acts as a negative regulator of the cGAS-STING pathway by mediating poly-ADP-ribosylation and inactivation of cgas. Acts as a negative regulator of adipogenesis by catalyzing poly ADP-ribosylation of histone H2B on 'Glu-35' (H2BE35ADPr). The sequence is that of Poly [ADP-ribose] polymerase 1 (parp1) from Xenopus laevis (African clawed frog).